The primary structure comprises 358 residues: Nuclear receptor subfamily 1 group I member 3 (358 aa).

Residues 18 to 93 (PRNCVVCGDR…VGMRKDMILS (76 aa)) constitute a DNA-binding region (nuclear receptor). The NR C4-type zinc finger occupies 21–41 (CVVCGDRATGYHFHALTCEGC). At threonine 48 the chain carries Phosphothreonine; by PKC. The NR C4-type zinc-finger motif lies at 57 to 81 (CPFAGRCEVSKAQRRHCPACRLQKC). The region spanning 119–358 (QQKELIQTLL…MMPLLGEICS (240 aa)) is the NR LBD domain.

This sequence belongs to the nuclear hormone receptor family. NR1 subfamily. As to quaternary structure, heterodimer of NR1I3 and RXR. Interacts with PSMC4. Interacts with ECT2. Directly interacts with DNAJC7; this complex may also include HSP90. Interacts with CRY1. Interacts with CRY2 in a ligand-dependent manner. Phosphorylated at Thr-48 by PKC, dephosphorylation of Thr-48 is required for nuclear translocation and activation.

The protein resides in the nucleus. It is found in the cytoplasm. It localises to the cytoskeleton. Functionally, binds and transactivates the retinoic acid response elements that control expression of the retinoic acid receptor beta 2 and alcohol dehydrogenase 3 genes. Transactivates both the phenobarbital responsive element module of the human CYP2B6 gene and the CYP3A4 xenobiotic response element. The protein is Nuclear receptor subfamily 1 group I member 3 (Nr1i3) of Rattus norvegicus (Rat).